The following is a 539-amino-acid chain: MTKNNTNRHYSLRKLKTGTASVAVALTVLGAGLVVNTNEVSAVATRSQTDTLEKVQERADKFEIENNTLKLKNSDLSFNNKALKDHNDELTEELSNAKEKLRKNDKSLSEKASKIQELEARKADLEKALEGAMNFSTADSAKIKTLEAEKAALAARKADLEKALEGAMNFSTADSAKIKTLEAEKAALEARQAELEKALEGAMNFSTADSAKIKTLEAEKAALAARKADLEKALEGAMNFSTADSAKIKTLEAEKAALEARQAELEKALEGAMNFSTADSAKIKTLEAEKAALEAEKADLEHQSQVLNANRQSLRRDLDASREAKKQLEAEHQKLEEQNKISEASRQSLRRDLDASREAKKQLEAEHQKLEEQNKISEASRQSLRRDLDASREAKKQVEKALEEANSKLAALEKLNKELEESKKLTEKEKAELQAKLEAEAKALKEKLAKQAEELAKLRAGKASDSQTPDAKPGNKAVPGKGQAPQAGTKPNQNKAPMKETKRQLPSTGETANPFFTAAALTVMATAGVAAVVKRKEEN.

The first 42 residues, 1–42, serve as a signal peptide directing secretion; sequence MTKNNTNRHYSLRKLKTGTASVAVALTVLGAGLVVNTNEVSA. The stretch at 118–152 is one A-1 repeat; that stretch reads LEARKADLEKALEGAMNFSTADSAKIKTLEAEKAA. Residues 118–301 form a 5.3 X 35 AA tandem repeats, A-type region; the sequence is LEARKADLEK…ALEAEKADLE (184 aa). An A-2 repeat occupies 153-187; that stretch reads LAARKADLEKALEGAMNFSTADSAKIKTLEAEKAA. An A-3 repeat occupies 188 to 222; sequence LEARQAELEKALEGAMNFSTADSAKIKTLEAEKAA. The A-4 repeat unit spans residues 223–257; the sequence is LAARKADLEKALEGAMNFSTADSAKIKTLEAEKAA. One copy of the A-5 repeat lies at 258–292; sequence LEARQAELEKALEGAMNFSTADSAKIKTLEAEKAA. An A-6; truncated repeat occupies 293–297; sequence LEAEK. Residues 297-401 are disordered; that stretch reads KADLEHQSQV…REAKKQVEKA (105 aa). C repeat units lie at residues 298 to 332, 333 to 367, and 368 to 402; these read ADLE…EAEH, QKLE…EAEH, and QKLE…EKAL. Over residues 303 to 312 the composition is skewed to polar residues; that stretch reads QSQVLNANRQ. Basic and acidic residues-rich tracts occupy residues 314-340, 349-375, and 384-401; these read LRRD…EQNK and LRRD…VEKA. D repeat units lie at residues 435-440, 441-446, 449-454, and 456-461; these read AKLEAE, AKALKE, AKQAEE, and AKLRAG. Residues 456–511 are disordered; that stretch reads AKLRAGKASDSQTPDAKPGNKAVPGKGQAPQAGTKPNQNKAPMKETKRQLPSTGET. The LPXTG sorting signal motif lies at 505–509; sequence LPSTG. The residue at position 508 (threonine 508) is a Pentaglycyl murein peptidoglycan amidated threonine. Positions 509-539 are cleaved as a propeptide — removed by sortase; it reads GETANPFFTAAALTVMATAGVAAVVKRKEEN.

The protein belongs to the M protein family.

Its subcellular location is the secreted. The protein localises to the cell wall. This protein is one of the different antigenic serotypes of protein M. Protein M is closely associated with virulence of the bacterium and can render the organism resistant to phagocytosis. In Streptococcus pyogenes, this protein is M protein, serotype 24 (emm24).